Consider the following 424-residue polypeptide: Microcin H47 secretion protein MchE (424 aa).

The Cytoplasmic portion of the chain corresponds to methionine 1 to proline 25. A helical membrane pass occupies residues leucine 26–valine 46. Topologically, residues glycine 47–aspartate 424 are periplasmic.

Belongs to the membrane fusion protein (MFP) (TC 8.A.1) family.

The protein localises to the cell inner membrane. Probably involved, in conjunction with MchF, in the secretion of microcin H47. The sequence is that of Microcin H47 secretion protein MchE (mchE) from Escherichia coli.